The sequence spans 241 residues: Tetraspanin-1 (241 aa).

Residues 1 to 11 (MGCFNFIKVMM) are Cytoplasmic-facing. A helical membrane pass occupies residues 12-32 (ILFNMLIFLCGAALLAVGIWV). Over 33-52 (SVDGPSFVKIFGPMSSSAMQ) the chain is Extracellular. Residues 53-73 (FVNVGYFLIAAGAVLFALGFL) traverse the membrane as a helical segment. Residues 74 to 88 (GCYGAQTESKCALMT) lie on the Cytoplasmic side of the membrane. The helical transmembrane segment at 89-109 (FFFILLLIFIAEVAAAVVALV) threads the bilayer. Residues 110-211 (YTTLAENFLT…KQLLYDIRTN (102 aa)) are Extracellular-facing. N-linked (GlcNAc...) asparagine glycosylation is found at Asn141, Asn154, Asn167, Asn180, Asn189, and Asn194. The chain crosses the membrane as a helical span at residues 212-232 (AVTVGGVAAGIGGLELAAMIV). The Cytoplasmic segment spans residues 233-241 (SMYLYCNLE).

Belongs to the tetraspanin (TM4SF) family. As to quaternary structure, interacts with SLC19A2. Interacts with NTRK1/TRKA.

It localises to the lysosome membrane. Its function is as follows. Structural component of specialized membrane microdomains known as tetraspanin-enriched microdomains (TERMs), which act as platforms for receptor clustering and signaling. Participates thereby in diverse biological functions such as cell signal transduction, adhesion, migration and protein trafficking. Regulates neuronal differentiation in response to NGF by facilitating NGF-mediated activation of NTRK1/TRKA receptor tyrosine kinase and subsequent downstream signaling pathways. Plays a role in the inhibition of TNFalpha-induced apoptosis. Mechanistically, inhibits the NF-kappa-B signaling pathway by blocking phosphorylation of CHUK. Also promotes the stability of the thiamine transporter 1/SLC19A2 in intestinal epithelial cells leading to an increase of thiamine uptake process. The sequence is that of Tetraspanin-1 (TSPAN1) from Bos taurus (Bovine).